A 417-amino-acid polypeptide reads, in one-letter code: Serine hydroxymethyltransferase (417 aa).

(6S)-5,6,7,8-tetrahydrofolate contacts are provided by residues L121 and 125-127 (GHL). N6-(pyridoxal phosphate)lysine is present on K229. Residue 355-357 (SPF) coordinates (6S)-5,6,7,8-tetrahydrofolate.

It belongs to the SHMT family. Homodimer. Pyridoxal 5'-phosphate is required as a cofactor.

The protein localises to the cytoplasm. It catalyses the reaction (6R)-5,10-methylene-5,6,7,8-tetrahydrofolate + glycine + H2O = (6S)-5,6,7,8-tetrahydrofolate + L-serine. The protein operates within one-carbon metabolism; tetrahydrofolate interconversion. Its pathway is amino-acid biosynthesis; glycine biosynthesis; glycine from L-serine: step 1/1. In terms of biological role, catalyzes the reversible interconversion of serine and glycine with tetrahydrofolate (THF) serving as the one-carbon carrier. This reaction serves as the major source of one-carbon groups required for the biosynthesis of purines, thymidylate, methionine, and other important biomolecules. Also exhibits THF-independent aldolase activity toward beta-hydroxyamino acids, producing glycine and aldehydes, via a retro-aldol mechanism. This is Serine hydroxymethyltransferase from Proteus mirabilis (strain HI4320).